Here is a 193-residue protein sequence, read N- to C-terminus: Ion-translocating oxidoreductase complex subunit A (193 aa).

The next 6 helical transmembrane spans lie at 5-25 (VLLLIGTVLVNNFVLVQFLGL), 39-59 (IGMSLATTFVLTLASVTSYLV), 63-83 (ILIPLDITYLRTMSFILVIAV), 102-122 (LLGIFLPLITTNCAVLGVALL), 134-154 (AVYGFGAAVGFSLVLVLFAAL), and 171-191 (SIALITAGLMSMAFMGFTGLV).

The protein belongs to the NqrDE/RnfAE family. In terms of assembly, the complex is composed of six subunits: RnfA, RnfB, RnfC, RnfD, RnfE and RnfG.

It is found in the cell inner membrane. In terms of biological role, part of a membrane-bound complex that couples electron transfer with translocation of ions across the membrane. The protein is Ion-translocating oxidoreductase complex subunit A of Pseudoalteromonas translucida (strain TAC 125).